The chain runs to 121 residues: MAKYRAGRINEEVKKEISSIIRMDLKDPRISAMVSVTKVDVTKDQRYAKVYVSIFGDEKSKEETLEALKSSSGFIRREVGHRIKLRYTPEIIIQNDDSIEHGMHIDSILDKIKENEDHDNK.

This sequence belongs to the RbfA family. Monomer. Binds 30S ribosomal subunits, but not 50S ribosomal subunits or 70S ribosomes.

The protein resides in the cytoplasm. Functionally, one of several proteins that assist in the late maturation steps of the functional core of the 30S ribosomal subunit. Associates with free 30S ribosomal subunits (but not with 30S subunits that are part of 70S ribosomes or polysomes). Required for efficient processing of 16S rRNA. May interact with the 5'-terminal helix region of 16S rRNA. The sequence is that of Ribosome-binding factor A from Clostridium tetani (strain Massachusetts / E88).